Here is a 284-residue protein sequence, read N- to C-terminus: Nucleotide-binding protein NMCC_0698 (284 aa).

8 to 15 (GLSGSGKS) provides a ligand contact to ATP. 58 to 61 (DVRS) is a binding site for GTP.

It belongs to the RapZ-like family.

Functionally, displays ATPase and GTPase activities. This chain is Nucleotide-binding protein NMCC_0698, found in Neisseria meningitidis serogroup C (strain 053442).